The sequence spans 586 residues: Methionine--tRNA ligase, mitochondrial (586 aa).

A mitochondrion-targeting transit peptide spans 1–46 (MLRQCARWVLTRTRFGRGCRRYGSCSPSASGDAGEARAYFTTPIFY). A 'HIGH' region motif is present at residues 45–55 (FYVNAAPHIGH). The short motif at 340–344 (KMSKS) is the 'KMSKS' region element. K343 contacts ATP.

It belongs to the class-I aminoacyl-tRNA synthetase family.

It localises to the mitochondrion matrix. It carries out the reaction tRNA(Met) + L-methionine + ATP = L-methionyl-tRNA(Met) + AMP + diphosphate. This Mus musculus (Mouse) protein is Methionine--tRNA ligase, mitochondrial (Mars2).